The chain runs to 285 residues: Anamorsin homolog 1 (285 aa).

An N-terminal SAM-like domain region spans residues 1–150; the sequence is MEATVLLVTD…QKPTWETGSS (150 aa). The linker stretch occupies residues 150–195; that stretch reads SFSLKKKSVQKQESLPKPGALSVKPEMNVDLEDLIDEESLLSEEDL. 4 residues coordinate [2Fe-2S] cluster: C206, C215, C218, and C220. Positions 206 to 220 are fe-S binding site A; it reads CEVSTKRKACKNCTC. [4Fe-4S] cluster-binding residues include C246, C249, C257, and C260. Short sequence motifs (cx2C motif) lie at residues 246–249 and 257–260; these read CGNC and CSSC. The tract at residues 246 to 260 is fe-S binding site B; that stretch reads CGNCGLGDAFRCSSC.

Belongs to the anamorsin family. As to quaternary structure, monomer. The cofactor is [2Fe-2S] cluster. [4Fe-4S] cluster is required as a cofactor.

The protein localises to the cytoplasm. It is found in the mitochondrion intermembrane space. Functionally, component of the cytosolic iron-sulfur (Fe-S) protein assembly (CIA) machinery. Required for the maturation of extramitochondrial Fe-S proteins. Part of an electron transfer chain functioning in an early step of cytosolic Fe-S biogenesis, facilitating the de novo assembly of a [4Fe-4S] cluster on the cytosolic Fe-S scaffold complex. Electrons are transferred from NADPH via a FAD- and FMN-containing diflavin oxidoreductase. Together with the diflavin oxidoreductase, also required for the assembly of the diferric tyrosyl radical cofactor of ribonucleotide reductase (RNR), probably by providing electrons for reduction during radical cofactor maturation in the catalytic small subunit. In Picea sitchensis (Sitka spruce), this protein is Anamorsin homolog 1.